Reading from the N-terminus, the 95-residue chain is Aspartyl/glutamyl-tRNA(Asn/Gln) amidotransferase subunit C (95 aa).

This sequence belongs to the GatC family. Heterotrimer of A, B and C subunits.

The enzyme catalyses L-glutamyl-tRNA(Gln) + L-glutamine + ATP + H2O = L-glutaminyl-tRNA(Gln) + L-glutamate + ADP + phosphate + H(+). It carries out the reaction L-aspartyl-tRNA(Asn) + L-glutamine + ATP + H2O = L-asparaginyl-tRNA(Asn) + L-glutamate + ADP + phosphate + 2 H(+). In terms of biological role, allows the formation of correctly charged Asn-tRNA(Asn) or Gln-tRNA(Gln) through the transamidation of misacylated Asp-tRNA(Asn) or Glu-tRNA(Gln) in organisms which lack either or both of asparaginyl-tRNA or glutaminyl-tRNA synthetases. The reaction takes place in the presence of glutamine and ATP through an activated phospho-Asp-tRNA(Asn) or phospho-Glu-tRNA(Gln). The chain is Aspartyl/glutamyl-tRNA(Asn/Gln) amidotransferase subunit C from Azorhizobium caulinodans (strain ATCC 43989 / DSM 5975 / JCM 20966 / LMG 6465 / NBRC 14845 / NCIMB 13405 / ORS 571).